Consider the following 235-residue polypeptide: Phosphoribosylaminoimidazole-succinocarboxamide synthase (235 aa).

Belongs to the SAICAR synthetase family.

It catalyses the reaction 5-amino-1-(5-phospho-D-ribosyl)imidazole-4-carboxylate + L-aspartate + ATP = (2S)-2-[5-amino-1-(5-phospho-beta-D-ribosyl)imidazole-4-carboxamido]succinate + ADP + phosphate + 2 H(+). It participates in purine metabolism; IMP biosynthesis via de novo pathway; 5-amino-1-(5-phospho-D-ribosyl)imidazole-4-carboxamide from 5-amino-1-(5-phospho-D-ribosyl)imidazole-4-carboxylate: step 1/2. The polypeptide is Phosphoribosylaminoimidazole-succinocarboxamide synthase (Streptococcus pneumoniae serotype 19F (strain G54)).